Consider the following 75-residue polypeptide: Large ribosomal subunit protein bL31 (75 aa).

The protein belongs to the bacterial ribosomal protein bL31 family. Type A subfamily. As to quaternary structure, part of the 50S ribosomal subunit.

Functionally, binds the 23S rRNA. The protein is Large ribosomal subunit protein bL31 of Acidiphilium cryptum (strain JF-5).